The primary structure comprises 97 residues: Peptide YY (97 aa).

The signal sequence occupies residues 1–28 (MVFVRRPWPALTTVLLALLVCLGALVDA). Ser-41 is modified (phosphoserine). Tyr-64 bears the Tyrosine amide mark. The disordered stretch occupies residues 65–97 (GKRDGPDTLLSKTFFPDGEDRPVRSRSEGPDLW). Positions 68 to 97 (DGPDTLLSKTFFPDGEDRPVRSRSEGPDLW) are excised as a propeptide. A compositionally biased stretch (basic and acidic residues) spans 82-97 (GEDRPVRSRSEGPDLW).

Belongs to the NPY family. In terms of processing, the peptide YY form is cleaved at Pro-30 by the prolyl endopeptidase FAP (seprase) activity (in vitro) to generate peptide YY(3-36).

It is found in the secreted. Functionally, this gut peptide inhibits exocrine pancreatic secretion, has a vasoconstrictory action and inhibitis jejunal and colonic mobility. The protein is Peptide YY (PYY) of Homo sapiens (Human).